Consider the following 305-residue polypeptide: Acetaldehyde dehydrogenase 5 (305 aa).

11 to 14 (SGNI) serves as a coordination point for NAD(+). Cys130 functions as the Acyl-thioester intermediate in the catalytic mechanism. NAD(+)-binding positions include 161-169 (SIGPGTRAN) and Asn272.

The protein belongs to the acetaldehyde dehydrogenase family.

The catalysed reaction is acetaldehyde + NAD(+) + CoA = acetyl-CoA + NADH + H(+). This chain is Acetaldehyde dehydrogenase 5, found in Dechloromonas aromatica (strain RCB).